The sequence spans 283 residues: MSEVSKISTLLAPEKFVKLSVSDKFKWKAPSRVCSIVQSDTISMTANGRSLFTFDVLKDVLKHAEEYTYVDVLGVVLSGQWLLPKGTPGSAEIILLDSRLKGKASVLAVFNCRAATQEFQFLISPGYSLTCADALKKPFEISCNVIDLPVKDGFTPLSVEIACLVQFSNCVITRSLTMKLKENPATRTFSAEEVDELLGSMTTLRSIEGLRKKKEPNDVVQGHLSAEYDVKRSVKRTKSENTPGKRRVNVDSVSLGLGKGKSVSAKNEDTESVFDDGILDSDS.

The interval 233–283 (SVKRTKSENTPGKRRVNVDSVSLGLGKGKSVSAKNEDTESVFDDGILDSDS) is disordered. Residues 270–283 (TESVFDDGILDSDS) are compositionally biased toward acidic residues.

The protein belongs to the tobamovirus movement protein family.

The protein resides in the host cytoplasm. It localises to the host cytoskeleton. The protein localises to the host cell junction. Its subcellular location is the host plasmodesma. Its function is as follows. Transports viral genome to neighboring plant cells directly through plasmosdesmata, without any budding. The movement protein allows efficient cell to cell propagation, by bypassing the host cell wall barrier. Forms a ribonucleoprotein complex with viral RNA. Binds microtubules and modulates microtubule stability. Can bind double-stranded DNA. The sequence is that of Movement protein (MP) from Crotalaria juncea (Sunn hemp).